Consider the following 118-residue polypeptide: Basic phospholipase A2 PA-11 (118 aa).

7 disulfides stabilise this stretch: cysteine 11-cysteine 71, cysteine 27-cysteine 117, cysteine 29-cysteine 45, cysteine 44-cysteine 98, cysteine 51-cysteine 91, cysteine 60-cysteine 84, and cysteine 78-cysteine 89. Tyrosine 28, glycine 30, and glycine 32 together coordinate Ca(2+). The active site involves histidine 48. Aspartate 49 contacts Ca(2+). Aspartate 92 is a catalytic residue.

Belongs to the phospholipase A2 family. Group I subfamily. D49 sub-subfamily. Ca(2+) is required as a cofactor. As to expression, expressed by the venom gland.

It is found in the secreted. The enzyme catalyses a 1,2-diacyl-sn-glycero-3-phosphocholine + H2O = a 1-acyl-sn-glycero-3-phosphocholine + a fatty acid + H(+). Its function is as follows. PLA2 catalyzes the calcium-dependent hydrolysis of the 2-acyl groups in 3-sn-phosphoglycerides. This is Basic phospholipase A2 PA-11 from Pseudechis australis (Mulga snake).